A 176-amino-acid polypeptide reads, in one-letter code: ATP-dependent protease subunit HslV (176 aa).

Thr-5 is a catalytic residue. Na(+) is bound by residues Ser-161, Cys-164, and Thr-167.

This sequence belongs to the peptidase T1B family. HslV subfamily. In terms of assembly, a double ring-shaped homohexamer of HslV is capped on each side by a ring-shaped HslU homohexamer. The assembly of the HslU/HslV complex is dependent on binding of ATP.

The protein resides in the cytoplasm. It carries out the reaction ATP-dependent cleavage of peptide bonds with broad specificity.. Its activity is regulated as follows. Allosterically activated by HslU binding. In terms of biological role, protease subunit of a proteasome-like degradation complex believed to be a general protein degrading machinery. The sequence is that of ATP-dependent protease subunit HslV from Caldanaerobacter subterraneus subsp. tengcongensis (strain DSM 15242 / JCM 11007 / NBRC 100824 / MB4) (Thermoanaerobacter tengcongensis).